The sequence spans 92 residues: Cell division protein FtsB (92 aa).

The Cytoplasmic portion of the chain corresponds to 1–3 (MRL). Residues 4-21 (LILILLSVLVLFQHDFWF) form a helical membrane-spanning segment. Residues 22–92 (GSNGFLDYRQ…VFYHIVKESK (71 aa)) are Periplasmic-facing. The stretch at 28–63 (DYRQNAEKIKENQAENEKLSQRNQRINAEIQGLTKG) forms a coiled coil.

Belongs to the FtsB family. Part of a complex composed of FtsB, FtsL and FtsQ.

The protein localises to the cell inner membrane. Its function is as follows. Essential cell division protein. May link together the upstream cell division proteins, which are predominantly cytoplasmic, with the downstream cell division proteins, which are predominantly periplasmic. This chain is Cell division protein FtsB, found in Haemophilus influenzae (strain PittEE).